The following is a 263-amino-acid chain: Acetylglutamate kinase (263 aa).

Residues 48 to 49 (GG), arginine 70, and asparagine 162 each bind substrate.

Belongs to the acetylglutamate kinase family. ArgB subfamily.

It localises to the cytoplasm. It catalyses the reaction N-acetyl-L-glutamate + ATP = N-acetyl-L-glutamyl 5-phosphate + ADP. It participates in amino-acid biosynthesis; L-arginine biosynthesis; N(2)-acetyl-L-ornithine from L-glutamate: step 2/4. Catalyzes the ATP-dependent phosphorylation of N-acetyl-L-glutamate. This Vibrio campbellii (strain ATCC BAA-1116) protein is Acetylglutamate kinase.